The following is a 57-amino-acid chain: U17-myrmicitoxin-Tb1a (57 aa).

An N-terminal signal peptide occupies residues 1 to 29 (MEKNRTNIFSVYLMITFLLISIFITMVMS). The propeptide occupies 30–33 (DGEA). A disulfide bridge connects residues cysteine 42 and cysteine 53. Alanine 56 bears the Alanine amide mark.

In terms of processing, O-glycosylated. Expressed by the venom gland.

The protein localises to the secreted. Serine protease inhibitor which exhibits antifibrinolytic, antielastolytic and antimicrobial activities. Displays antimicrobial activity against bacteria and fungi. Likely functions in the innate immune response to microbial infection and possibly in the venom, as an antifibrinolytic agent. In Tetramorium bicarinatum (Tramp ant), this protein is U17-myrmicitoxin-Tb1a.